The sequence spans 179 residues: Adenine phosphoribosyltransferase (179 aa).

This sequence belongs to the purine/pyrimidine phosphoribosyltransferase family. As to quaternary structure, homodimer.

The protein resides in the cytoplasm. It catalyses the reaction AMP + diphosphate = 5-phospho-alpha-D-ribose 1-diphosphate + adenine. It functions in the pathway purine metabolism; AMP biosynthesis via salvage pathway; AMP from adenine: step 1/1. Its function is as follows. Catalyzes a salvage reaction resulting in the formation of AMP, that is energically less costly than de novo synthesis. In Nitrobacter winogradskyi (strain ATCC 25391 / DSM 10237 / CIP 104748 / NCIMB 11846 / Nb-255), this protein is Adenine phosphoribosyltransferase.